The chain runs to 201 residues: Large ribosomal subunit protein uL18 (201 aa).

The protein belongs to the universal ribosomal protein uL18 family. As to quaternary structure, part of the 50S ribosomal subunit. Contacts the 5S and 23S rRNAs.

This is one of the proteins that bind and probably mediate the attachment of the 5S RNA into the large ribosomal subunit, where it forms part of the central protuberance. This chain is Large ribosomal subunit protein uL18, found in Thermococcus gammatolerans (strain DSM 15229 / JCM 11827 / EJ3).